Here is a 176-residue protein sequence, read N- to C-terminus: Probable inosine/xanthosine triphosphatase (176 aa).

Residue Asp36 coordinates Mg(2+).

This sequence belongs to the YjjX NTPase family. In terms of assembly, homodimer. Requires Mg(2+) as cofactor. Mn(2+) is required as a cofactor.

The enzyme catalyses XTP + H2O = XDP + phosphate + H(+). The catalysed reaction is ITP + H2O = IDP + phosphate + H(+). Functionally, phosphatase that hydrolyzes non-canonical purine nucleotides such as XTP and ITP to their respective diphosphate derivatives. Probably excludes non-canonical purines from DNA/RNA precursor pool, thus preventing their incorporation into DNA/RNA and avoiding chromosomal lesions. This Saccharolobus solfataricus (strain ATCC 35092 / DSM 1617 / JCM 11322 / P2) (Sulfolobus solfataricus) protein is Probable inosine/xanthosine triphosphatase.